The following is a 707-amino-acid chain: UvrABC system protein C (707 aa).

Residues 14-94 (AEPGCYLMKD…IKKHRPRFNV (81 aa)) enclose the GIY-YIG domain. Residues 206–241 (GELVERLRGRMAGAAEGLRFEEAARLRDQLQAVERS) form the UVR domain. The tract at residues 655 to 707 (DAPPIAADEPSGAPAGAPGGGPAEASPEAVAAATEAEIDAALADEDASPEPAA) is disordered. Low complexity-rich tracts occupy residues 660–670 (AADEPSGAPAG) and 677–689 (AEAS…AATE). Acidic residues predominate over residues 690–707 (AEIDAALADEDASPEPAA).

It belongs to the UvrC family. Interacts with UvrB in an incision complex.

It localises to the cytoplasm. The UvrABC repair system catalyzes the recognition and processing of DNA lesions. UvrC both incises the 5' and 3' sides of the lesion. The N-terminal half is responsible for the 3' incision and the C-terminal half is responsible for the 5' incision. The sequence is that of UvrABC system protein C from Anaeromyxobacter dehalogenans (strain 2CP-1 / ATCC BAA-258).